A 162-amino-acid chain; its full sequence is D-beta-D-heptose 1-phosphate adenylyltransferase (162 aa).

It catalyses the reaction D-glycero-beta-D-manno-heptose 1-phosphate + ATP + H(+) = ADP-D-glycero-beta-D-manno-heptose + diphosphate. Its pathway is nucleotide-sugar biosynthesis; ADP-L-glycero-beta-D-manno-heptose biosynthesis; ADP-L-glycero-beta-D-manno-heptose from D-glycero-beta-D-manno-heptose 7-phosphate: step 3/4. It functions in the pathway bacterial outer membrane biogenesis; LPS core biosynthesis. In terms of biological role, catalyzes the ADP transfer from ATP to D-glycero-beta-D-manno-heptose 1-phosphate, yielding ADP-D-glycero-beta-D-manno-heptose. Cannot use GTP, UTP, or CTP as substrate. Is not active against the alpha-anomer substrate. Is also able to catalyze the ADP transfer to beta-glucose 1-phosphate in vitro, yielding ADP-beta-glucose. The protein is D-beta-D-heptose 1-phosphate adenylyltransferase of Bordetella bronchiseptica (strain ATCC BAA-588 / NCTC 13252 / RB50) (Alcaligenes bronchisepticus).